Here is a 272-residue protein sequence, read N- to C-terminus: MQQQIIKELHVSQMVEPKEEIRKRVTFLKNYLKHSGAKGYVLGLSGGQDSTLAGKLAQMAIDELNEEEQDTSYVFIAVRLPYGVQKDEADAQDAIAFIKPSRSITVNIKDAVDASTKSFEQATGEVLSDFNKGNTKARERMKAQYDVGAHYGCLVIGTDHAAEAITGFFTKHGDGACDVAPLFGLTKRQGKSLLKELGAPTHLYTKAPTADLEDDRPGLPDEEALGLTYEQLDDYLEGKQVHDAIRKKIESRYLATEHKRQLPVTIFDSWWK.

Residue 43–50 (GLSGGQDS) coordinates ATP. Residue Asp49 coordinates Mg(2+). Arg138 serves as a coordination point for deamido-NAD(+). Position 158 (Thr158) interacts with ATP. Glu163 contributes to the Mg(2+) binding site. Residues Lys171 and Asp178 each coordinate deamido-NAD(+). Residues Lys187 and Thr209 each contribute to the ATP site. Position 258–259 (258–259 (HK)) interacts with deamido-NAD(+).

It belongs to the NAD synthetase family. Homodimer.

It carries out the reaction deamido-NAD(+) + NH4(+) + ATP = AMP + diphosphate + NAD(+) + H(+). It functions in the pathway cofactor biosynthesis; NAD(+) biosynthesis; NAD(+) from deamido-NAD(+) (ammonia route): step 1/1. Its function is as follows. Catalyzes the ATP-dependent amidation of deamido-NAD to form NAD. Uses ammonia as a nitrogen source. This is NH(3)-dependent NAD(+) synthetase from Halalkalibacterium halodurans (strain ATCC BAA-125 / DSM 18197 / FERM 7344 / JCM 9153 / C-125) (Bacillus halodurans).